A 442-amino-acid chain; its full sequence is Kelch domain-containing protein 10 (442 aa).

A disordered region spans residues 1 to 58 (MSAAQGWDRNRRRGGGAAGGGGGGSGAGGGSGGNGGRGTGQLNRFVQLSGRPHLPGKK). Residue Arg13 is modified to Omega-N-methylarginine. The span at 15 to 39 (GGAAGGGGGGSGAGGGSGGNGGRGT) shows a compositional bias: gly residues. Kelch repeat units follow at residues 87-154 (RPPP…PREL), 155-198 (ASMS…ALLS), 199-260 (CRGK…PEER), 261-319 (YRHE…RRCH), 320-364 (SCVQ…PEPV), and 365-403 (YFHC…LVVP). Positions 401–442 (VVPSLLELAWEKLLAAFPNLANLSRTQLLHLGLTQGLIERLK) are interaction with CUL2.

Belongs to the KLHDC10 family. Component of a CRL2 E3 ubiquitin-protein ligase complex, also named ECS (Elongin BC-CUL2/5-SOCS-box protein) complex, composed of CUL2, Elongin BC (ELOB and ELOC), RBX1 and substrate-specific adapter KLHDC10. Interacts (via the 6 Kelch repeats) with PPP5C.

Its subcellular location is the nucleus. The protein resides in the cytoplasm. It participates in protein modification; protein ubiquitination. In terms of biological role, substrate-recognition component of a Cul2-RING (CRL2) E3 ubiquitin-protein ligase complex of the DesCEND (destruction via C-end degrons) pathway, which recognizes a C-degron located at the extreme C-terminus of target proteins, leading to their ubiquitination and degradation. The C-degron recognized by the DesCEND pathway is usually a motif of less than ten residues and can be present in full-length proteins, truncated proteins or proteolytically cleaved forms. The CRL2(KLHDC10) complex specifically recognizes proteins with a proline-glycine (Pro-Gly) or an alanine tail (CAT tail) at the C-terminus, leading to their ubiquitination and degradation. The CRL2(KLHDC10) complex is involved in the ribosome-associated quality control (RQC) pathway, which mediates the extraction of incompletely synthesized nascent chains from stalled ribosomes: CRL2(KLHDC10) acts downstream of NEMF and recognizes CAT tails associated with stalled nascent chains, leading to their ubiquitination and degradation. Participates in the oxidative stress-induced cell death through MAP3K5 activation. Inhibits PPP5C phosphatase activity on MAP3K5. Acts as a regulator of necroptosis. This is Kelch domain-containing protein 10 (KLHDC10) from Bos taurus (Bovine).